Consider the following 270-residue polypeptide: Endochitinase PR4 (270 aa).

An N-terminal signal peptide occupies residues 1–23 (MGNKLVLVLVAVALVMGPKNVSA). The Chitin-binding type-1 domain occupies 24-58 (QNCGCAEGLCCSQYGYCGTGEDYCGTGCQQGPCTT). 7 disulfides stabilise this stretch: cysteine 26–cysteine 34, cysteine 28–cysteine 40, cysteine 33–cysteine 47, cysteine 51–cysteine 56, cysteine 88–cysteine 137, cysteine 150–cysteine 160, and cysteine 238–cysteine 270. Glutamate 132 acts as the Proton donor in catalysis.

Belongs to the glycosyl hydrolase 19 family. Chitinase class I subfamily.

The catalysed reaction is Random endo-hydrolysis of N-acetyl-beta-D-glucosaminide (1-&gt;4)-beta-linkages in chitin and chitodextrins.. Defense against chitin-containing fungal pathogens. The polypeptide is Endochitinase PR4 (CHI4) (Phaseolus vulgaris (Kidney bean)).